The primary structure comprises 53 residues: U13-myrmicitoxin-Tb1a (53 aa).

The N-terminal stretch at 1 to 23 (MKLIYIFSLVAVIAVTMIPGIMG) is a signal peptide. A propeptide spanning residues 24 to 29 (EAEAEG) is cleaved from the precursor. At lysine 52 the chain carries Lysine amide.

In terms of tissue distribution, expressed by the venom gland.

It is found in the secreted. Its function is as follows. In vivo, this neurotoxin paralyzes about 70% of blowflies (L.caesar) one hour after intrathoracic injection, when tested at high doses (45 nmol/g). The protein is U13-myrmicitoxin-Tb1a of Tetramorium bicarinatum (Tramp ant).